The primary structure comprises 320 residues: ATP phosphoribosyltransferase (320 aa).

It belongs to the ATP phosphoribosyltransferase family. Long subfamily. The cofactor is Mg(2+).

The protein resides in the cytoplasm. It catalyses the reaction 1-(5-phospho-beta-D-ribosyl)-ATP + diphosphate = 5-phospho-alpha-D-ribose 1-diphosphate + ATP. The protein operates within amino-acid biosynthesis; L-histidine biosynthesis; L-histidine from 5-phospho-alpha-D-ribose 1-diphosphate: step 1/9. With respect to regulation, feedback inhibited by histidine. In terms of biological role, catalyzes the condensation of ATP and 5-phosphoribose 1-diphosphate to form N'-(5'-phosphoribosyl)-ATP (PR-ATP). Has a crucial role in the pathway because the rate of histidine biosynthesis seems to be controlled primarily by regulation of HisG enzymatic activity. This is ATP phosphoribosyltransferase (hisG) from Caulobacter vibrioides (strain ATCC 19089 / CIP 103742 / CB 15) (Caulobacter crescentus).